The sequence spans 119 residues: UPF0145 protein Ta0182 (119 aa).

Belongs to the UPF0145 family.

In Thermoplasma acidophilum (strain ATCC 25905 / DSM 1728 / JCM 9062 / NBRC 15155 / AMRC-C165), this protein is UPF0145 protein Ta0182.